The following is a 627-amino-acid chain: Transducer protein MpcT (627 aa).

Transmembrane regions (helical) follow at residues 28-48 (MLTA…LTVF) and 55-75 (LIGV…TYLI). 2 HAMP domains span residues 78–132 (ADFV…VASR) and 192–247 (EQLR…DTIS). In terms of domain architecture, Methyl-accepting transducer spans 266–502 (RVDAVADRSA…DVVGMVEEVA (237 aa)). E310, E416, and E507 each carry glutamate methyl ester (Glu). Disordered stretches follow at residues 505-527 (SEET…DATD) and 557-627 (GTAD…ADSQ). Over residues 580–590 (AAAVVDQPQPA) the composition is skewed to low complexity.

Belongs to the methyl-accepting chemotaxis (MCP) protein family. As to quaternary structure, interacts with CheA, CheY and CheW1. Post-translationally, methylated by CheR.

It localises to the cell membrane. Functionally, mediates bacteriorhodopsin- and halorhodopsin-dependent photoresponses by detecting membrane potential changes. Probably transduces the signal to the histidine kinase CheA. The polypeptide is Transducer protein MpcT (mpcT) (Halobacterium salinarum (strain ATCC 29341 / DSM 671 / R1)).